A 475-amino-acid chain; its full sequence is Gamma-aminobutyric acid receptor subunit gamma-2 (475 aa).

Residues 1–39 form the signal peptide; it reads MSSPNIWSTGSSVYSTPVFSQKMTVWILLLLSLYPGFTS. Residues 40–275 lie on the Extracellular side of the membrane; sequence QKSDDDYEDY…FDLSRRMGYF (236 aa). N-linked (GlcNAc...) asparagine glycosylation is found at Asn-52 and Asn-129. A disulfide bond links Cys-190 and Cys-204. Residue Asn-247 is glycosylated (N-linked (GlcNAc...) asparagine). The chain crosses the membrane as a helical span at residues 276-296; the sequence is TIQTYIPCTLIVVLSWVSFWI. Residues 297–302 lie on the Cytoplasmic side of the membrane; the sequence is NKDAVP. Residues 303–322 traverse the membrane as a helical segment; sequence ARTSLGITTVLTMTTLSTIA. At 323 to 334 the chain is on the extracellular side; sequence RKSLPKVSYVTA. A helical membrane pass occupies residues 335-359; the sequence is MDLFVSVCFIFVFSALVEYGTLHYF. Topologically, residues 360 to 451 are cytoplasmic; that stretch reads VSNRKPSKDK…IHIRIAKMDS (92 aa). The tract at residues 433-450 is interaction with GABARAP; the sequence is RTGAWRHGRIHIRIAKMD. A helical membrane pass occupies residues 452–472; that stretch reads YARIFFPTAFCLFNLVYWVSY. Topologically, residues 473 to 475 are extracellular; that stretch reads LYL.

It belongs to the ligand-gated ion channel (TC 1.A.9) family. Gamma-aminobutyric acid receptor (TC 1.A.9.5) subfamily. GABRG2 sub-subfamily. As to quaternary structure, heteropentamer, formed by a combination of alpha (GABRA1-6), beta (GABRB1-3), gamma (GABRG1-3), delta (GABRD), epsilon (GABRE), rho (GABRR1-3), pi (GABRP) and theta (GABRQ) chains, each subunit exhibiting distinct physiological and pharmacological properties. Interacts with GABARAP. Interacts with KIF21B. Identified in a complex of 720 kDa composed of LHFPL4, NLGN2, GABRA1, GABRB2, GABRG2 and GABRB3. Interacts with LHFPL4. Interacts with SHISA7; interaction leads to the regulation of GABA(A) receptor trafficking, channel deactivation kinetics and pharmacology. Palmitoylated by ZDHHC3/GODZ; required for the accumulation of GABA(A) receptors at the postsynaptic membrane of inhibitory GABAergic synapses.

The protein localises to the postsynaptic cell membrane. The protein resides in the cell membrane. Its subcellular location is the cell projection. It is found in the dendrite. It localises to the cytoplasmic vesicle membrane. The catalysed reaction is chloride(in) = chloride(out). Allosterically activated by benzodiazepines. Activated by pentobarbital. Potentiated by etomidate, propofol, pregnanolone. Inhibited by the antagonist bicuculline. Inhibited by zinc ions. Potentiated by histamine. Its function is as follows. Gamma subunit of the heteropentameric ligand-gated chloride channel gated by gamma-aminobutyric acid (GABA), a major inhibitory neurotransmitter in the brain. GABA-gated chloride channels, also named GABA(A) receptors (GABAAR), consist of five subunits arranged around a central pore and contain GABA active binding site(s) located at the alpha and beta subunit interface(s). When activated by GABA, GABAARs selectively allow the flow of chloride anions across the cell membrane down their electrochemical gradient. Gamma-2/GABRG2-containing GABAARs are found at both synaptic and extrasynaptic sites. Chloride influx into the postsynaptic neuron following GABAAR opening decreases the neuron ability to generate a new action potential, thereby reducing nerve transmission. GABAARs containing alpha-1 and beta-2 or -3 subunits exhibit synaptogenic activity; the gamma-2 subunit being necessary but not sufficient to induce rapid synaptic contacts formation. Extrasynaptic gamma-2-containing receptors contribute to the tonic GABAergic inhibition. GABAARs function also as histamine receptor where histamine binds at the interface of two neighboring beta subunits and potentiates GABA response in a gamma-2 subunit-controlled manner. The polypeptide is Gamma-aminobutyric acid receptor subunit gamma-2 (Homo sapiens (Human)).